Reading from the N-terminus, the 260-residue chain is POLG alternative reading frame (260 aa).

2 disordered regions span residues 1–50 (MEPK…LRPR) and 108–219 (ARRG…RRGG). Composition is skewed to low complexity over residues 36 to 48 (AGSS…LQLR), 116 to 154 (GRGA…GQPG), and 164 to 186 (AEPA…EAPG). The interval 104–130 (ANLRARRGDAWRGRGAPQRRAPAEARA) is required for nucleolar localization. Gly residues-rich tracts occupy residues 187-199 (LGLG…VRPR) and 209-219 (RGAGPGVRRGG).

Interacts with C1QBP; the interaction results in nucleolar localization of C1QBP, probably due to prevention of C1QBP maturation and redirection from mitochondria to nucleoli. Undergoes proteolytic cleavage to produce a secreted C-terminal fragment.

The protein localises to the nucleus. It is found in the nucleolus. Its subcellular location is the secreted. This Homo sapiens (Human) protein is POLG alternative reading frame.